Reading from the N-terminus, the 386-residue chain is Transcription factor GTE1 (386 aa).

Disordered regions lie at residues 66 to 106 and 340 to 386; these read GAAQ…KHVS and ANKS…AKKA. Residues 68–78 are compositionally biased toward polar residues; the sequence is AQTNTSKSNSG. A Bromo domain is found at 105–211; that stretch reads VSSPDLMRQF…EKFEEKWLLI (107 aa). The region spanning 263–344 is the NET domain; it reads RESVVQRCRK…EALKAANKSS (82 aa). The span at 345-358 shows a compositional bias: low complexity; the sequence is GGTNAQNNNNTGTG.

As to expression, barely detectable in stems, leaves, siliques, and dry seeds, but was present at considerable levels in roots, flowers and imbibited seeds.

It localises to the nucleus. Transcription activator that plays a role in the promotion of seed germination by both negatively and positively regulating the abscisic acid (ABA) and phytochrome A (phyA) transduction pathways, respectively. The sequence is that of Transcription factor GTE1 (GTE1) from Arabidopsis thaliana (Mouse-ear cress).